The primary structure comprises 249 residues: Elongator complex protein 6 homolog (249 aa).

This sequence belongs to the ELP6 family. Component of the elongator complex.

It localises to the cytoplasm. The protein resides in the nucleus. It participates in tRNA modification; 5-methoxycarbonylmethyl-2-thiouridine-tRNA biosynthesis. Its function is as follows. Component of the elongator complex which is required for multiple tRNA modifications, including mcm5U (5-methoxycarbonylmethyl uridine), mcm5s2U (5-methoxycarbonylmethyl-2-thiouridine), and ncm5U (5-carbamoylmethyl uridine). The elongator complex catalyzes formation of carboxymethyluridine in the wobble base at position 34 in tRNAs. This Schizosaccharomyces pombe (strain 972 / ATCC 24843) (Fission yeast) protein is Elongator complex protein 6 homolog.